The primary structure comprises 185 residues: Ribosome-recycling factor (185 aa).

The protein belongs to the RRF family.

The protein localises to the cytoplasm. Its function is as follows. Responsible for the release of ribosomes from messenger RNA at the termination of protein biosynthesis. May increase the efficiency of translation by recycling ribosomes from one round of translation to another. This Shewanella amazonensis (strain ATCC BAA-1098 / SB2B) protein is Ribosome-recycling factor.